Consider the following 272-residue polypeptide: Protein UL24 homolog (272 aa).

This sequence belongs to the herpesviridae UL24 family.

Its subcellular location is the virion. The protein localises to the host cytoplasm. It localises to the host nucleus. It is found in the host nucleolus. The protein resides in the host Golgi apparatus. Its function is as follows. May participate in nuclear egress of viral particles. Plays a role in the dispersal of several host nucleolar proteins including NCL/nucleolin and NPM1. Since deletion of host NCL/nucleolin negatively impact on nuclear egress, UL24 supposedly acts on this process through its effect on host nucleoli. The sequence is that of Protein UL24 homolog from Equine herpesvirus 1 (strain V592) (EHV-1).